The chain runs to 35 residues: Thrombin-like enzyme cerastobin (35 aa).

Residues 1–35 (VIGGAKCNINEHRSIVLLYSSRLFGHTLINKEWVL) form the Peptidase S1 domain.

This sequence belongs to the peptidase S1 family. Snake venom subfamily. As to quaternary structure, monomer. In terms of tissue distribution, expressed by the venom gland.

It is found in the secreted. Inhibited by diisopropylfluorophosphate (DFP). Thrombin-like snake venom serine protease, that cleaves both alpha-chain (FGA) and beta-chain (FGB) of fibrinogen. Partially degrades factor X (F10), and release bradykinin from kininogen (KNG). Potently induces platelet aggregation. Shows a proteolytic activity towards protein constituents of the platelets cytoskeleton. Hydrolyzes actin, actin-binding protein, and P235. Shows a preferential cleavage at Arg-|-Xaa bonds. The sequence is that of Thrombin-like enzyme cerastobin from Cerastes vipera (Sahara sand viper).